The sequence spans 121 residues: Ribonuclease P protein component (121 aa).

It belongs to the RnpA family. Consists of a catalytic RNA component (M1 or rnpB) and a protein subunit.

The catalysed reaction is Endonucleolytic cleavage of RNA, removing 5'-extranucleotides from tRNA precursor.. RNaseP catalyzes the removal of the 5'-leader sequence from pre-tRNA to produce the mature 5'-terminus. It can also cleave other RNA substrates such as 4.5S RNA. The protein component plays an auxiliary but essential role in vivo by binding to the 5'-leader sequence and broadening the substrate specificity of the ribozyme. The protein is Ribonuclease P protein component of Alcanivorax borkumensis (strain ATCC 700651 / DSM 11573 / NCIMB 13689 / SK2).